Here is a 396-residue protein sequence, read N- to C-terminus: MAVQESAVQLSMTLKVQEYPTLKVPYETLNKRFRAAQKNIDRETSHVTMVVAELEKTLSGCPAVDSVVSLLDGVVEKLSVLKRKAVESIQAEDESAKLCKRRIEHLKEHSSDQPAAASVWKRKRMDRMMVEHLLRCGYYNTAVKLARQSGIEDLVNIEMFLTAKEVEESLERRETATCLAWCHDNKSRLRKMKSCLEFSLRIQEFIELIRQNKRLDAVRHARKHFSQAEGSQLDEVRQAMGMLAFPPDTHISPYKDLLDPARWRMLIQQFRYDNYRLHQLGNNSVFTLTLQAGLSAIKTPQCYKEDGSSKSPDCPVCSRSLNKLAQPLPMAHCANSRLVCKISGDVMNENNPPMMLPNGYVYGYNSLLSIRQDDKVVCPRTKEVFHFSQAEKVYIM.

The tract at residues 1 to 124 is extracellular and involved in cell to cell contact; that stretch reads MAVQESAVQL…AAASVWKRKR (124 aa). The residue at position 28 (threonine 28) is a Phosphothreonine. The region spanning 121–153 is the LisH domain; the sequence is KRKRMDRMMVEHLLRCGYYNTAVKLARQSGIED. The 58-residue stretch at 159–216 folds into the CTLH domain; the sequence is MFLTAKEVEESLERRETATCLAWCHDNKSRLRKMKSCLEFSLRIQEFIELIRQNKRLD. The RING-Gid-type zinc-finger motif lies at 314–381; the sequence is CPVCSRSLNK…QDDKVVCPRT (68 aa).

Identified in the CTLH complex that contains GID4, RANBP9 and/or RANBP10, MKLN1, MAEA, RMND5A (or alternatively its paralog RMND5B), GID8, ARMC8, WDR26 and YPEL5. Within this complex, MAEA, RMND5A (or alternatively its paralog RMND5B), GID8, WDR26, and RANBP9 and/or RANBP10 form the catalytic core, while GID4, MKLN1, ARMC8 and YPEL5 have ancillary roles. Interacts with F-actin. Autoubiquitinated as component of the CTLH E3 ubiquitin-protein ligase complex (in vitro).

It is found in the cytoplasm. The protein localises to the nucleus. It localises to the nucleoplasm. The protein resides in the nucleus matrix. Its subcellular location is the cell membrane. It is found in the cytoskeleton. The enzyme catalyses S-ubiquitinyl-[E2 ubiquitin-conjugating enzyme]-L-cysteine + [acceptor protein]-L-lysine = [E2 ubiquitin-conjugating enzyme]-L-cysteine + N(6)-ubiquitinyl-[acceptor protein]-L-lysine.. Its function is as follows. Core component of the CTLH E3 ubiquitin-protein ligase complex that selectively accepts ubiquitin from UBE2H and mediates ubiquitination and subsequent proteasomal degradation of the transcription factor HBP1. MAEA and RMND5A are both required for catalytic activity of the CTLH E3 ubiquitin-protein ligase complex. MAEA is required for normal cell proliferation. The CTLH E3 ubiquitin-protein ligase complex is not required for the degradation of enzymes involved in gluconeogenesis, such as FBP1. Plays a role in erythroblast enucleation during erythrocyte maturation and in the development of mature macrophages. Mediates the attachment of erythroid cell to mature macrophages; this MAEA-mediated contact inhibits erythroid cell apoptosis. Participates in erythroblastic island formation, which is the functional unit of definitive erythropoiesis. Associates with F-actin to regulate actin distribution in erythroblasts and macrophages. May contribute to nuclear architecture and cells division events. This Macaca fascicularis (Crab-eating macaque) protein is E3 ubiquitin-protein transferase MAEA (MAEA).